The sequence spans 503 residues: MDKVWWHTAWGLLCLLQLSLAQQQIDLNITCRYAGVFHVEKNGRYSISRTEAADLCEAFNTTLPTMAQMELALRKGFETCRYGFIEGHVVIPRIHPNAICAANNTGVYILLASNTSHYDTYCFNASAPLEEDCTSVTDLPNSFDGPVTITIVNRDGTRYSKKGEYRTHQEDIDASNIIDEDVSSGSTIEKSTPEGYILHTDLPTSQPTGDRDDAFFIGSTLATIATTPWVSAHTKQNQERTQWNPIHSNPEVLLQTTTRMTDIDRNSTSAHGENWTQEPQPPFNNHEYQDEEETPHATSTTWADPNSTTEEAATQKEKWFENEWQGKNPPTPSEDSHVTEGTTASAHNNHPSQRMTTQSQEDVSWTDFFDPISHPMGQGHQTESKGHSSGNQDSGVTTTSGPARRPQIPEWLIILASLLALALILAVCIAVNSRRRCGQKKKLVINSGNGTVEDRKPSELNGEASKSQEMVHLVNKEPTETPDQFMTADETRNLQSVDMKIGV.

The N-terminal stretch at 1-21 (MDKVWWHTAWGLLCLLQLSLA) is a signal peptide. The Extracellular portion of the chain corresponds to 22–410 (QQQIDLNITC…GPARRPQIPE (389 aa)). N-linked (GlcNAc...) asparagine glycosylation occurs at Asn28. Cystine bridges form between Cys31–Cys133, Cys56–Cys122, and Cys80–Cys100. One can recognise a Link domain in the interval 35 to 124 (GVFHVEKNGR…TSHYDTYCFN (90 aa)). Arg44 lines the hyaluronan pocket. Asn60 is a glycosylation site (N-linked (GlcNAc...) asparagine). Positions 81 and 82 each coordinate hyaluronan. A glycan (N-linked (GlcNAc...) asparagine) is linked at Asn103. Tyr108 is a hyaluronan binding site. 2 N-linked (GlcNAc...) asparagine glycosylation sites follow: Asn114 and Asn124. 3 disordered regions span residues 172–213 (IDAS…DRDD), 232–252 (AHTKQNQERTQWNPIHSNPEV), and 264–404 (DRNS…GPAR). O-linked (Xyl...) (chondroitin sulfate) serine glycosylation occurs at Ser184. The segment at 228–410 (PWVSAHTKQN…GPARRPQIPE (183 aa)) is stem. 2 stretches are compositionally biased toward polar residues: residues 232–247 (AHTKQNQERTQWNPIH) and 264–278 (DRNSTSAHGENWTQE). Residues Asn266 and Asn274 are each glycosylated (N-linked (GlcNAc...) asparagine). Tyr288 bears the Sulfotyrosine mark. 3 stretches are compositionally biased toward polar residues: residues 296 to 312 (HATSTTWADPNSTTEEA), 339 to 363 (TEGTTASAHNNHPSQRMTTQSQEDV), and 387 to 401 (HSSGNQDSGVTTTSG). Asn306 carries an N-linked (GlcNAc...) asparagine glycan. Residues 411 to 431 (WLIILASLLALALILAVCIAV) form a helical membrane-spanning segment. Topologically, residues 432-503 (NSRRRCGQKK…LQSVDMKIGV (72 aa)) are cytoplasmic. Residue Ser433 is modified to Phosphoserine; by PKC. The segment at 434 to 452 (RRRCGQKKKLVINSGNGTV) is required for interaction with EZR, MSN and RDX and for co-localization to microvilli. Phosphoserine is present on Ser447. Residue Thr451 is modified to Phosphothreonine. 2 positions are modified to phosphoserine: Ser458 and Ser467.

As to quaternary structure, interacts with PKN2. Interacts with TIAM1 and TIAM2. Interacts with HA, as well as other glycosaminoglycans, collagen, laminin, and fibronectin via its N-terminal segment. Interacts with UNC119. Interacts with PDPN (via extracellular domain); this interaction is required for PDPN-mediated directional migration and regulation of lamellipodia extension/stabilization during cell spreading and migration. Interacts with RDX, EZR and MSN. Interacts with EGFR. Interacts with CD74; this complex is essential for the MIF-induced signaling cascade that results in B cell survival. N-glycosylated. Post-translationally, O-glycosylated; contains chondroitin sulfate glycans which can be more or less sulfated. In terms of processing, phosphorylated; activation of PKC results in the dephosphorylation of Ser-467 (constitutive phosphorylation site), and the phosphorylation of Ser-433.

It localises to the cell membrane. It is found in the cell projection. The protein localises to the microvillus. Its subcellular location is the secreted. Functionally, cell-surface receptor that plays a role in cell-cell interactions, cell adhesion and migration, helping them to sense and respond to changes in the tissue microenvironment. Participates thereby in a wide variety of cellular functions including the activation, recirculation and homing of T-lymphocytes, hematopoiesis, inflammation and response to bacterial infection. Engages, through its ectodomain, extracellular matrix components such as hyaluronan/HA, collagen, growth factors, cytokines or proteases and serves as a platform for signal transduction by assembling, via its cytoplasmic domain, protein complexes containing receptor kinases and membrane proteases. Such effectors include PKN2, the RhoGTPases RAC1 and RHOA, Rho-kinases and phospholipase C that coordinate signaling pathways promoting calcium mobilization and actin-mediated cytoskeleton reorganization essential for cell migration and adhesion. The chain is CD44 antigen (Cd44) from Rattus norvegicus (Rat).